We begin with the raw amino-acid sequence, 117 residues long: Large ribosomal subunit protein bL20 (117 aa).

The protein belongs to the bacterial ribosomal protein bL20 family.

Its function is as follows. Binds directly to 23S ribosomal RNA and is necessary for the in vitro assembly process of the 50S ribosomal subunit. It is not involved in the protein synthesizing functions of that subunit. In Roseiflexus sp. (strain RS-1), this protein is Large ribosomal subunit protein bL20.